The chain runs to 308 residues: Sulfate adenylyltransferase subunit 2 (308 aa).

The disordered stretch occupies residues 286-308 (RQGRIIDHDGSASMEKKKQEGYF).

Belongs to the PAPS reductase family. CysD subfamily. In terms of assembly, heterodimer composed of CysD, the smaller subunit, and CysN.

The enzyme catalyses sulfate + ATP + H(+) = adenosine 5'-phosphosulfate + diphosphate. The protein operates within sulfur metabolism; hydrogen sulfide biosynthesis; sulfite from sulfate: step 1/3. Functionally, with CysN forms the ATP sulfurylase (ATPS) that catalyzes the adenylation of sulfate producing adenosine 5'-phosphosulfate (APS) and diphosphate, the first enzymatic step in sulfur assimilation pathway. APS synthesis involves the formation of a high-energy phosphoric-sulfuric acid anhydride bond driven by GTP hydrolysis by CysN coupled to ATP hydrolysis by CysD. In Nocardia farcinica (strain IFM 10152), this protein is Sulfate adenylyltransferase subunit 2.